A 172-amino-acid polypeptide reads, in one-letter code: MKLEDYIATIENYPKEGVTFRDISPLMADGNAYSYAIREIVQYATDKKIDMIVGPEARGFIVGCPVAFELGIGFAPVRKPGKLPRKVISVDYEKEYGVDTLCMHADAIKPGQRVLIVDDLLATGGTVKATIEMIERLGGVVAGCAFLIELDGLNGREAIEGYDAKVLMNFPG.

The protein belongs to the purine/pyrimidine phosphoribosyltransferase family. As to quaternary structure, homodimer.

It localises to the cytoplasm. The enzyme catalyses AMP + diphosphate = 5-phospho-alpha-D-ribose 1-diphosphate + adenine. The protein operates within purine metabolism; AMP biosynthesis via salvage pathway; AMP from adenine: step 1/1. Its function is as follows. Catalyzes a salvage reaction resulting in the formation of AMP, that is energically less costly than de novo synthesis. The sequence is that of Adenine phosphoribosyltransferase from Streptococcus thermophilus (strain ATCC BAA-250 / LMG 18311).